The chain runs to 286 residues: Putative WUSCHEL-related homeobox 2 (286 aa).

2 disordered regions span residues Met1–Thr25 and Ser128–Thr152. A DNA-binding region (homeobox; WUS-type) is located at residues Gly23 to Leu87.

Belongs to the WUS homeobox family.

It localises to the nucleus. Its function is as follows. Transcription factor which may be involved in developmental processes. The protein is Putative WUSCHEL-related homeobox 2 (WOX2) of Oryza sativa subsp. indica (Rice).